The sequence spans 643 residues: Mitochondrial Rho GTPase 2 (643 aa).

The Cytoplasmic portion of the chain corresponds to 1–611 (MMLGGKSSAG…SGRRSRNIRQ (611 aa)). The 168-residue stretch at 12 to 179 (RTSLRVAVAG…FYFASKAVLH (168 aa)) folds into the Miro 1 domain. 2 consecutive EF-hand domains span residues 195-230 (RLRR…CFGA) and 315-350 (EAMD…APDS). Aspartate 208, aspartate 210, aspartate 212, glutamate 219, aspartate 328, aspartate 330, aspartate 332, and glutamate 339 together coordinate Ca(2+). A Miro 2 domain is found at 423 to 592 (RNVFQCFVFG…FSRIVSTAEN (170 aa)). The chain crosses the membrane as a helical span at residues 612 to 632 (LVNSSLLFVSVGTAVGFAGLA). Topologically, residues 633 to 643 (AYRAYSARKNA) are mitochondrial intermembrane.

It belongs to the mitochondrial Rho GTPase family. As to expression, expressed roots, rosette and cauline leaves, stems, flowers and siliques.

It localises to the mitochondrion outer membrane. With respect to regulation, activated by calcium. In terms of biological role, calcium-binding mitochondrial GTPase involved in calcium signaling during salt stress response. May play a role in the progression of embryonic cell division, development of haploid male and female gametes, and pollen tube growth. The sequence is that of Mitochondrial Rho GTPase 2 from Arabidopsis thaliana (Mouse-ear cress).